Consider the following 265-residue polypeptide: UPF0246 protein NT01EI_0662 (265 aa).

This sequence belongs to the UPF0246 family.

The sequence is that of UPF0246 protein NT01EI_0662 from Edwardsiella ictaluri (strain 93-146).